The primary structure comprises 105 residues: Dicamba O-demethylase, ferredoxin component (105 aa).

A 2Fe-2S ferredoxin-type domain is found at 2–105 (PQITVVNQSG…GIKVTIAQED (104 aa)). [2Fe-2S] cluster contacts are provided by Cys-40, Cys-46, Cys-49, and Cys-86.

Belongs to the adrenodoxin/putidaredoxin family. In terms of assembly, monomer. The dicamba O-demethylase multicomponent enzyme system is composed of an oxygenase component (DdmC) and an electron transfer component formed by a ferredoxin reductase (DdmA1) and a ferredoxin (DdmB). In vitro, dicamba O-demethylase assays in which DdmA2 is substituted for DdmA1 demonstrate that the two enzymes possess nearly identical activities. The cofactor is [2Fe-2S] cluster.

In terms of biological role, component of the dicamba O-demethylase multicomponent enzyme system involved in the degradation of the herbicide dicamba. In vitro, functions as an intermediate electron transfer protein. The sequence is that of Dicamba O-demethylase, ferredoxin component from Stenotrophomonas maltophilia (Pseudomonas maltophilia).